The chain runs to 1035 residues: MPRRKQQAPKRAAGYAQEEQLKEEEEIKEEEEEEEDSGSVAQLQGSNDPGTDEELETGAEQKGCFSYQNSPGSHLSNQDAENESLLSDASDQVSDIKSVCSRDASDKKASVHPKLPTEAHSCMDKMTAVYANILSDSYWSGLGLGFKLSSSERRHCDTRNGSSKTDFDWHQDALSKSLQQNLPPRSVSKPSLFSSVQLYRQSSKMCGTVFTGASRFRCRQCSAAYDTLVELTVHMNETGHYQDDNRKKDKLRPTSYSKPRKRAFQDMDKEDAQKVLKCMFCGDSFDSLQDLSVHMIKTKHYQKVPLKEPVPTISSKMVTPAKKRVFDVNRPCSPDSTTGSFADPFPAPKNASLQLSSNNRYGYQNGASYTWQFEACKSQILKCMECGSSHDTLQQLTTHMMVTGHFLKVTSSASKKGKQLVLDPLAVEKMQSLSDAPSSDSLAPKPSSNSASDCTASTTELKRESKKEKPEELRTDEKVLKSEDYEDPLQKPLDPAMKYQYLREEDLEDGSKGGGDILKSLENTVTTAINKAQNGAPSWSAYPSIHAAYQLSEGTKPSLPMGSQVLQIRPNLANKLRPIAPKWKVMPLVSVPTSLAPYTQVKKEPEDKEEVAKECGQESPHEEASSFSHSEGDSFPKSEPPAESKKAEPCPLREEDKRMKDGGEKEKAQPVEPVSSLSNGCALAAHAPAPPCVNPLSALQSVLNNHLGKATEPLRSPSCSSPSSSTMAMFHKSSLGVMDKPVLSPASTRPASVSRRYLFENNDQPIDLTKSKSKKAESSQAQSCTSPPQKHALSDIADMVKVLPKATTPKPAASSRVPPVKLEMDVRRFEDVSSEVSTLHKRKGRQSNWNPQHLLILQAQFASSLFQTSEGKYLLSDLGPQERMQISKFTGLSMTTISHWLANVKYQLRKTGGTKFLKNMDKGHPIFYCSDCASQFRTPSTYISHLESHLGFQMKDMTRMAVEQQSQVEQEISRVSSAQRSPETIAGEEDTDSKFKCKLCCRTFVSKHAVKLHLSKTHSKSPEHHAQFVTDVDEE.

The tract at residues 1 to 92 is disordered; sequence MPRRKQQAPK…ESLLSDASDQ (92 aa). Positions 13 to 42 form a coiled coil; the sequence is AGYAQEEQLKEEEEIKEEEEEEEDSGSVAQ. Residues 21–37 show a composition bias toward acidic residues; that stretch reads LKEEEEIKEEEEEEEDS. Composition is skewed to polar residues over residues 39-49 and 66-92; these read SVAQLQGSNDP and SYQN…ASDQ. A Glycyl lysine isopeptide (Lys-Gly) (interchain with G-Cter in SUMO2) cross-link involves residue Lys-189. C2H2-type zinc fingers lie at residues 216–240 and 276–300; these read FRCR…ETGH and LKCM…KTKH. The disordered stretch occupies residues 240-266; it reads HYQDDNRKKDKLRPTSYSKPRKRAFQD. Residues Lys-307 and Lys-316 each participate in a glycyl lysine isopeptide (Lys-Gly) (interchain with G-Cter in SUMO2) cross-link. A C2H2-type 3; atypical zinc finger spans residues 381–405; that stretch reads LKCMECGSSHDTLQQLTTHMMVTGH. Residue Lys-418 forms a Glycyl lysine isopeptide (Lys-Gly) (interchain with G-Cter in SUMO2) linkage. The segment covering 432–450 has biased composition (low complexity); that stretch reads SLSDAPSSDSLAPKPSSNS. Positions 432 to 496 are disordered; the sequence is SLSDAPSSDS…DPLQKPLDPA (65 aa). Positions 460–483 are enriched in basic and acidic residues; it reads ELKRESKKEKPEELRTDEKVLKSE. Residues Lys-462, Lys-481, Lys-498, and Lys-602 each participate in a glycyl lysine isopeptide (Lys-Gly) (interchain with G-Cter in SUMO2) cross-link. Disordered regions lie at residues 600–674 and 764–791; these read QVKK…VEPV and QPID…PQKH. Residues 601-669 show a composition bias toward basic and acidic residues; it reads VKKEPEDKEE…KDGGEKEKAQ (69 aa). Residues Lys-801 and Lys-821 each participate in a glycyl lysine isopeptide (Lys-Gly) (interchain with G-Cter in SUMO2) cross-link. The homeobox DNA-binding region spans 842–912; that stretch reads RKGRQSNWNP…NVKYQLRKTG (71 aa). Residues 927 to 949 form a C2H2-type 4 zinc finger; that stretch reads FYCSDCASQFRTPSTYISHLESH. The span at 968–977 shows a compositional bias: low complexity; the sequence is VEQEISRVSS. 2 disordered regions span residues 968 to 987 and 1015 to 1035; these read VEQE…TIAG and SKTH…VDEE. The residue at position 981 (Ser-981) is a Phosphoserine. The C2H2-type 5 zinc-finger motif lies at 995 to 1018; sequence FKCKLCCRTFVSKHAVKLHLSKTH.

The protein belongs to the teashirt C2H2-type zinc-finger protein family. Interacts (via homeobox domain) with APBB1 (via PID domain 1). In terms of processing, sumoylated.

It is found in the nucleus. Probable transcriptional regulator involved in developmental processes. May act as a transcriptional repressor (Potential). The chain is Teashirt homolog 2 (TSHZ2) from Sus scrofa (Pig).